Reading from the N-terminus, the 724-residue chain is Small conductance calcium-activated potassium channel protein 3 (724 aa).

Over residues 1 to 11 (MDTSGHFHDSG) the composition is skewed to basic and acidic residues. Disordered stretches follow at residues 1-161 (MDTS…RDSN) and 232-251 (ATHN…FPKA). Residues 34–58 (QPPPPPPPPAPPAAPQQPPGPPLQP) are compositionally biased toward pro residues. The segment covering 59 to 88 (QPLQLQQQQQQQQQQPPHPLSQLAQLQSQP) has biased composition (low complexity). Residues 105–125 (PSSNSTAILHPSSRQGSQLNL) show a composition bias toward polar residues. Positions 131–140 (GHSPSSTATS) are enriched in low complexity. The residue at position 160 (Ser160) is a Phosphoserine. A compositionally biased stretch (polar residues) spans 232-249 (ATHNHQHAGTTASSTTFP). Residues 281–301 (LIFGMFGIVVMVIETELSWGL) form a helical membrane-spanning segment. Residues 308 to 328 (FSLALKCLISLSTIILLGLII) traverse the membrane as a helical segment. A helical transmembrane segment spans residues 359-379 (ISLEMLVCAIHPIPGEYKFFW). The chain crosses the membrane as a helical span at residues 398 to 418 (IILSIPMFLRLYLIARVMLLH). A helical membrane pass occupies residues 447-467 (LMTICPGTVLLVFSISLWIIA). Positions 487–507 (FLGAMWLISITFLSIGYGDMV) form an intramembrane region, pore-forming. The chain crosses the membrane as a helical span at residues 516–536 (VCLLTGIMGAGCTALVVAVVA). The segment at 554–630 (DTQLTKRIKN…LVDLSKMQNV (77 aa)) is calmodulin-binding. Residues 635-662 (ITELNDRSEDLEKQIGSLESKLEHLTAS) adopt a coiled-coil conformation. The disordered stretch occupies residues 702–724 (LSDSPIGVSSTSFPTPYTSSSSC). The segment covering 710 to 724 (SSTSFPTPYTSSSSC) has biased composition (low complexity).

It belongs to the potassium channel KCNN family. KCa2.3/KCNN3 subfamily. In terms of assembly, homodimer. Heteromultimer with KCNN2 or KCNN1; this modulates plasma membrane expression and consequently the small conductance calcium-activated potassium channel activity. The complex is composed of 4 channel subunits each of which binds to a calmodulin subunit which regulates the channel activity through calcium-binding. Interacts with CALM1.

The protein resides in the cell membrane. Its subcellular location is the cytoplasm. It localises to the myofibril. It is found in the sarcomere. The protein localises to the z line. The enzyme catalyses K(+)(in) = K(+)(out). Its activity is regulated as follows. Inhibited by bee venom neurotoxin apamin. Functionally, small conductance calcium-activated potassium channel that mediates the voltage-independent transmembrane transfer of potassium across the cell membrane through a constitutive interaction with calmodulin which binds the intracellular calcium allowing its opening. The current is characterized by a voltage-independent activation, an intracellular calcium concentration increase-dependent activation and a single-channel conductance of 10 picosiemens. Also presents an inwardly rectifying current, thus reducing its already small outward conductance of potassium ions, which is particularly the case when the membrane potential displays positive values, above + 20 mV. Activation is followed by membrane hyperpolarization. Thought to regulate neuronal excitability by contributing to the slow component of synaptic afterhyperpolarization. The chain is Small conductance calcium-activated potassium channel protein 3 from Sus scrofa (Pig).